The primary structure comprises 288 residues: Disulfide-bond oxidoreductase YghU (288 aa).

Glutathione is bound by residues Asn26, Thr52–Asn54, Gln87, Ile101, Glu117–Ser118, Gln151, and Arg178. In terms of domain architecture, GST N-terminal spans Gln46 to Leu133. Residues Lys139 to Leu265 enclose the GST C-terminal domain. The segment at Arg260 to Gly288 is disordered. Over residues Gln268–Gly288 the composition is skewed to basic and acidic residues.

This sequence belongs to the GST superfamily. Nu-class GSH transferase family. As to quaternary structure, homodimer.

In terms of biological role, exhibits a robust glutathione (GSH)-dependent disulfide-bond reductase activity toward the model substrate, 2-hydroxyethyl disulfide; the actual physiological substrates are not known. Also displays a modest GSH-dependent peroxidase activity toward several organic hydroperoxides, such as cumene hydroperoxide and linoleic acid 13(S)-hydroperoxide, but does not reduce H(2)O(2) or tert-butyl hydroperoxide at appreciable rates. Exhibits little or no GSH transferase activity with most typical electrophilic substrates, and has no detectable transferase activity toward 1-chloro-2,4-dinitrobenzene (CDNB) with glutathionylspermidine (GspSH) as the nucleophilic substrate. The protein is Disulfide-bond oxidoreductase YghU (yghU) of Escherichia coli (strain K12).